Here is a 557-residue protein sequence, read N- to C-terminus: Dihydroxy-acid dehydratase (557 aa).

A [2Fe-2S] cluster-binding site is contributed by Cys-47. Asp-79 serves as a coordination point for Mg(2+). Cys-120 contacts [2Fe-2S] cluster. 2 residues coordinate Mg(2+): Asp-121 and Lys-122. Residue Lys-122 is modified to N6-carboxylysine. Cys-192 serves as a coordination point for [2Fe-2S] cluster. Position 444 (Glu-444) interacts with Mg(2+). Ser-470 acts as the Proton acceptor in catalysis.

This sequence belongs to the IlvD/Edd family. As to quaternary structure, homodimer. [2Fe-2S] cluster is required as a cofactor. The cofactor is Mg(2+).

The catalysed reaction is (2R)-2,3-dihydroxy-3-methylbutanoate = 3-methyl-2-oxobutanoate + H2O. It carries out the reaction (2R,3R)-2,3-dihydroxy-3-methylpentanoate = (S)-3-methyl-2-oxopentanoate + H2O. Its pathway is amino-acid biosynthesis; L-isoleucine biosynthesis; L-isoleucine from 2-oxobutanoate: step 3/4. It participates in amino-acid biosynthesis; L-valine biosynthesis; L-valine from pyruvate: step 3/4. In terms of biological role, functions in the biosynthesis of branched-chain amino acids. Catalyzes the dehydration of (2R,3R)-2,3-dihydroxy-3-methylpentanoate (2,3-dihydroxy-3-methylvalerate) into 2-oxo-3-methylpentanoate (2-oxo-3-methylvalerate) and of (2R)-2,3-dihydroxy-3-methylbutanoate (2,3-dihydroxyisovalerate) into 2-oxo-3-methylbutanoate (2-oxoisovalerate), the penultimate precursor to L-isoleucine and L-valine, respectively. In Synechococcus sp. (strain CC9605), this protein is Dihydroxy-acid dehydratase.